Consider the following 306-residue polypeptide: uncharacterized protein (306 aa).

8 consecutive transmembrane segments (helical) span residues 7–27 (LESW…GYLA), 30–50 (VGII…FMAL), 68–88 (LFIT…LFAL), 95–115 (ADHV…TLFI), 144–164 (AIGV…LMSF), 194–214 (IGAI…VLSV), 232–252 (IAIM…GLIF), and 274–294 (TIPF…NVAP).

Its subcellular location is the cell membrane. This is an uncharacterized protein from Mycoplasma genitalium (strain ATCC 33530 / DSM 19775 / NCTC 10195 / G37) (Mycoplasmoides genitalium).